Here is a 349-residue protein sequence, read N- to C-terminus: GTPase Obg (349 aa).

The Obg domain occupies 1–159; sequence MKFLDEAKVY…RWIWLRLKLI (159 aa). The region spanning 160-327 is the OBG-type G domain; the sequence is ADAGLVGLPN…ALRALVEVIG (168 aa). Residues 166-173, 191-195, 212-215, 279-282, and 308-310 each bind GTP; these read GLPNAGKS, FTTLH, DIPG, NKID, and SGV. Mg(2+)-binding residues include Ser173 and Thr193.

Belongs to the TRAFAC class OBG-HflX-like GTPase superfamily. OBG GTPase family. Monomer. It depends on Mg(2+) as a cofactor.

It is found in the cytoplasm. In terms of biological role, an essential GTPase which binds GTP, GDP and possibly (p)ppGpp with moderate affinity, with high nucleotide exchange rates and a fairly low GTP hydrolysis rate. Plays a role in control of the cell cycle, stress response, ribosome biogenesis and in those bacteria that undergo differentiation, in morphogenesis control. This chain is GTPase Obg, found in Rhodopseudomonas palustris (strain BisB18).